The following is a 119-amino-acid chain: Large ribosomal subunit protein uL14c (119 aa).

This sequence belongs to the universal ribosomal protein uL14 family. In terms of assembly, part of the 50S ribosomal subunit.

It is found in the plastid. It localises to the chloroplast. Binds to 23S rRNA. In Ostreococcus tauri, this protein is Large ribosomal subunit protein uL14c.